The primary structure comprises 491 residues: G2/mitotic-specific cyclin-2 (491 aa).

N-acetylserine is present on Ser2. 2 disordered regions span residues 59 to 107 and 164 to 184; these read EGSR…DPSS and HPARSQLQVRNTESETDSGKK. Polar residues predominate over residues 67–77; the sequence is TRESVSRSTAA.

It belongs to the cyclin family. Cyclin AB subfamily. As to quaternary structure, interacts with NAP1.

In terms of biological role, essential for the control of the cell cycle at the G2/M (mitosis) transition. Interacts with the CDC2 protein kinase to form MPF. G2/M cyclins accumulate steadily during G2 and are abruptly destroyed at mitosis. The protein is G2/mitotic-specific cyclin-2 (CLB2) of Saccharomyces cerevisiae (strain ATCC 204508 / S288c) (Baker's yeast).